A 682-amino-acid polypeptide reads, in one-letter code: DNA-directed RNA polymerase subunit beta' (682 aa).

Residues Cys69, Cys71, Cys87, and Cys90 each coordinate Zn(2+). Mg(2+) is bound by residues Asp491, Asp493, and Asp495.

It belongs to the RNA polymerase beta' chain family. RpoC1 subfamily. As to quaternary structure, in plastids the minimal PEP RNA polymerase catalytic core is composed of four subunits: alpha, beta, beta', and beta''. When a (nuclear-encoded) sigma factor is associated with the core the holoenzyme is formed, which can initiate transcription. The cofactor is Mg(2+). Zn(2+) is required as a cofactor.

The protein resides in the plastid. Its subcellular location is the chloroplast. It catalyses the reaction RNA(n) + a ribonucleoside 5'-triphosphate = RNA(n+1) + diphosphate. DNA-dependent RNA polymerase catalyzes the transcription of DNA into RNA using the four ribonucleoside triphosphates as substrates. This is DNA-directed RNA polymerase subunit beta' from Lotus japonicus (Lotus corniculatus var. japonicus).